The sequence spans 637 residues: MALLSIVSLQVPKSCGLKSLISSSNVQKALCISTAVPTLRMRRRQKALVINMKLTTVSHRDDNGGGVLQRRIADHHPNLWEDDFIQSLSSPYGGSSYSERAVTVVEEVKEMFNSIPNNRELFGSQNDLLTRLWMVDSIERLGIDRHFQNEIRVALDYVYSYWKEKEGIGCGRDSTFPDLNSTALALRTLRLHGYNVSSDVLEYFKDQKGHFACPAILTEGQITRSVLNLYRASLVAFPGEKVMEEAEIFSASYLKEVLQKIPVSSFSREIEYVLEYGWHTNLPRLEARNYIDVYGQDSYESSNEMPYVNTQKLLKLAKLEFNIFHSLQQKELQYISRWWKDSCSSHLTFTRHRHVEYYTMASCISMEPKHSAFRLGFVKTCHLLTVLDDMYDTFGTLDELQLFTTAFKRWDLSETKCLPEYMKAVYMDLYQCLNELAQEAEKTQGRDTLNYIRNAYESHFDSFMHEAKWISSGYLPTFEEYLKNGKVSSGSRTATLQPILTLDVPLPNYILQEIDYPSRFNDLASSLLRLRGDTRCYKADRARGEEASAISCYMKDHPGSTEEDALNHINVMISDAIRELNWELLRPDSKSPISSKKHAFDITRAFHHLYKYRDGYTVASSETKNLVMKTVLEPVAL.

The transit peptide at M1 to T56 directs the protein to the chloroplast. Mg(2+) is bound by residues D388, D392, and D540. Residues D388–D392 carry the DDXXD motif motif.

The protein belongs to the terpene synthase family. Tpsd subfamily. The cofactor is Mg(2+). Mn(2+) serves as cofactor. Requires K(+) as cofactor.

The protein localises to the plastid. It localises to the chloroplast. It catalyses the reaction (2E)-geranyl diphosphate = (4S)-limonene + diphosphate. It carries out the reaction (2E)-geranyl diphosphate = (1S,5S)-alpha-pinene + diphosphate. It functions in the pathway terpene metabolism; oleoresin biosynthesis. Functionally, involved in defensive oleoresin formation in conifers in response to insect attack or other injury. Involved in monoterpene (C10) olefins biosynthesis. This Abies grandis (Grand fir) protein is Limonene/alpha-pinene synthase, chloroplastic (ag11).